The following is an 83-amino-acid chain: Sec-independent protein translocase protein TatA (83 aa).

Residues 1–21 form a helical membrane-spanning segment; that stretch reads MGSFSIWHWLIVLLIVVMVFG. The segment at 44–83 is disordered; sequence KDGGQSAAATDDKPAAPAGQVTNAQASDKTTIDVEARQKS. Over residues 63–72 the composition is skewed to polar residues; that stretch reads QVTNAQASDK. Basic and acidic residues predominate over residues 73-83; it reads TTIDVEARQKS.

It belongs to the TatA/E family. As to quaternary structure, the Tat system comprises two distinct complexes: a TatABC complex, containing multiple copies of TatA, TatB and TatC subunits, and a separate TatA complex, containing only TatA subunits. Substrates initially bind to the TatABC complex, which probably triggers association of the separate TatA complex to form the active translocon.

The protein localises to the cell inner membrane. In terms of biological role, part of the twin-arginine translocation (Tat) system that transports large folded proteins containing a characteristic twin-arginine motif in their signal peptide across membranes. TatA could form the protein-conducting channel of the Tat system. In Polaromonas sp. (strain JS666 / ATCC BAA-500), this protein is Sec-independent protein translocase protein TatA.